A 537-amino-acid polypeptide reads, in one-letter code: MVHFIFVTGGVVSSLGKGLTAASLAMLLQAKGFRVSVRKLDPYLNIDPGTMNPHEHGEVYVTDDGAETDLDLGHYERFTGVSACKFDSITTGAIYSKLLKDERLGNYAGVTVQVIPHVTNIIKDFILSNTKGVDFIICEIGGTVGDIEGLPFFEAIRQIGNQLKSENCLFIHLTLLPYVKTARELKIKPTQHSVKALRAIGISPNILVCRAERNISKGEIDKISLLCNIESEYVVPAIDQKNIYLVPIAYHNSGLDNKVLKFFNINIMPSKLDKWHDIINRLKDSNSKVRIAIIAKYHKLKDAYKSVIEALDHAGIYYKYKIDLVWINAENLTEENINKKLLDIDGILVPGGFGERATKGKIIAIKYARTNNIPFFGICFGMQLATIEIAQNLIGIKDAVTEEFKVDGTKIIEKINKNCEDSKITIENVKKTMRLGSYPCSLVAGTIAANAYKSLEINERHRHRYKFNNEFQNIFEKHGIVFSGFSKDEEIVEIIELPLLRWFVGVQFHPEFKSKPFEAHPLFIQFIKAAIEYNKCN.

Residues 1–265 are amidoligase domain; sequence MVHFIFVTGG…DNKVLKFFNI (265 aa). Residue serine 13 coordinates CTP. Residue serine 13 coordinates UTP. Residues 14 to 19 and aspartate 71 each bind ATP; that span reads SLGKGL. Positions 71 and 139 each coordinate Mg(2+). CTP-binding positions include 146–148 and lysine 222; that span reads DIE. Lysine 222 is a binding site for UTP. Residues 290-536 enclose the Glutamine amidotransferase type-1 domain; that stretch reads RIAIIAKYHK…IKAAIEYNKC (247 aa). Glycine 352 serves as a coordination point for L-glutamine. The Nucleophile; for glutamine hydrolysis role is filled by cysteine 379. L-glutamine contacts are provided by residues 380-383, glutamate 403, and arginine 464; that span reads FGMQ. Residues histidine 509 and glutamate 511 contribute to the active site.

Belongs to the CTP synthase family. As to quaternary structure, homotetramer.

It catalyses the reaction UTP + L-glutamine + ATP + H2O = CTP + L-glutamate + ADP + phosphate + 2 H(+). The enzyme catalyses L-glutamine + H2O = L-glutamate + NH4(+). The catalysed reaction is UTP + NH4(+) + ATP = CTP + ADP + phosphate + 2 H(+). It participates in pyrimidine metabolism; CTP biosynthesis via de novo pathway; CTP from UDP: step 2/2. Allosterically activated by GTP, when glutamine is the substrate; GTP has no effect on the reaction when ammonia is the substrate. The allosteric effector GTP functions by stabilizing the protein conformation that binds the tetrahedral intermediate(s) formed during glutamine hydrolysis. Inhibited by the product CTP, via allosteric rather than competitive inhibition. Its function is as follows. Catalyzes the ATP-dependent amination of UTP to CTP with either L-glutamine or ammonia as the source of nitrogen. Regulates intracellular CTP levels through interactions with the four ribonucleotide triphosphates. The chain is CTP synthase from Rickettsia peacockii (strain Rustic).